The chain runs to 381 residues: E3 ubiquitin-protein ligase RNF13 (381 aa).

An N-terminal signal peptide occupies residues Met-1 to Ala-34. The Lumenal segment spans residues Asp-35–Tyr-182. In terms of domain architecture, PA spans Lys-65 to Asp-160. A glycan (N-linked (GlcNAc...) asparagine) is linked at Asn-88. The chain crosses the membrane as a helical span at residues Tyr-183–Ile-203. Over Thr-204–Val-381 the chain is Cytoplasmic. The RING-type; atypical zinc-finger motif lies at Cys-240–Lys-282. Positions Val-285–Val-381 are disordered. 2 stretches are compositionally biased toward acidic residues: residues Ser-292–Glu-304 and Ser-339–Glu-357.

In terms of assembly, interacts with ERN1. In terms of processing, autoubiquitinated. As to expression, widely expressed (at protein level). In normal pancreas, expressed in islets, but not in ducts, nor in acini (at protein level).

The protein resides in the endoplasmic reticulum membrane. It is found in the late endosome membrane. Its subcellular location is the lysosome membrane. It localises to the nucleus inner membrane. The enzyme catalyses S-ubiquitinyl-[E2 ubiquitin-conjugating enzyme]-L-cysteine + [acceptor protein]-L-lysine = [E2 ubiquitin-conjugating enzyme]-L-cysteine + N(6)-ubiquitinyl-[acceptor protein]-L-lysine.. The protein operates within protein modification; protein ubiquitination. Functionally, E3 ubiquitin-protein ligase that regulates cell proliferation. Involved in apoptosis regulation. Mediates ER stress-induced activation of JNK signaling pathway and apoptosis by promoting ERN1 activation and splicing of XBP1 mRNA. Also involved in protein trafficking and localization. This chain is E3 ubiquitin-protein ligase RNF13, found in Homo sapiens (Human).